A 140-amino-acid polypeptide reads, in one-letter code: Perlin matrix protein (140 aa).

A signal peptide spans 1–26; the sequence is MTCTLRLTVAALVLLGICHLSRPVAA.

Belongs to the N16 matrix protein family. Heterooligomer; disulfide-linked. Pif97, Pif80, N16 and other proteins form a complex. Component of conchiolin, the organic matrix of nacre. Only expressed in the dorsal region of the mantle.

It localises to the secreted. The protein localises to the extracellular space. It is found in the extracellular matrix. Its function is as follows. May be specifically involved in the formation of the nacreous layer. This Margaritifera margaritifera (Freshwater pearl mussel) protein is Perlin matrix protein.